The chain runs to 631 residues: ESX-3 secretion system protein EccA3 (631 aa).

385-392 (GPPGTGKT) contacts ATP.

Belongs to the CbxX/CfxQ family. As to quaternary structure, part of the ESX-3 / type VII secretion system (T7SS), which is composed of cytosolic and membrane components.

It is found in the cytoplasm. Functionally, part of the ESX-3 specialized secretion system, which is important for iron and zinc uptake or homeostasis. EccA3 exhibits ATPase activity and may provide energy for the export of ESX-3 substrates. This chain is ESX-3 secretion system protein EccA3, found in Mycobacterium tuberculosis (strain CDC 1551 / Oshkosh).